The chain runs to 209 residues: NADH-quinone oxidoreductase subunit C (209 aa).

Belongs to the complex I 30 kDa subunit family. NDH-1 is composed of 14 different subunits. Subunits NuoB, C, D, E, F, and G constitute the peripheral sector of the complex.

The protein resides in the cell inner membrane. It catalyses the reaction a quinone + NADH + 5 H(+)(in) = a quinol + NAD(+) + 4 H(+)(out). Functionally, NDH-1 shuttles electrons from NADH, via FMN and iron-sulfur (Fe-S) centers, to quinones in the respiratory chain. The immediate electron acceptor for the enzyme in this species is believed to be ubiquinone. Couples the redox reaction to proton translocation (for every two electrons transferred, four hydrogen ions are translocated across the cytoplasmic membrane), and thus conserves the redox energy in a proton gradient. In Bordetella petrii (strain ATCC BAA-461 / DSM 12804 / CCUG 43448), this protein is NADH-quinone oxidoreductase subunit C.